Reading from the N-terminus, the 189-residue chain is uncharacterized protein (189 aa).

This sequence to M.jannaschii MJ1461.

This is an uncharacterized protein from Methanocaldococcus jannaschii (strain ATCC 43067 / DSM 2661 / JAL-1 / JCM 10045 / NBRC 100440) (Methanococcus jannaschii).